Here is a 1767-residue protein sequence, read N- to C-terminus: Endo-alpha-N-acetylgalactosaminidase (1767 aa).

Residues 1–39 (MNKGLFEKRCKYSIRKFSLGVASVMIGAAFFGTSPVLAD) form the signal peptide. Composition is skewed to basic and acidic residues over residues 61–75 (KENDGRDFEAPKVGE) and 84–111 (DGPKTEEELLALEKEKPAEEKPKEDKPA). Disordered stretches follow at residues 61 to 124 (KEND…VTPE) and 301 to 324 (VKTDNQEGVKTEDTPAEKETGPEV). Low complexity predominate over residues 112–124 (AAKPETPKTVTPE). Residues 304 to 324 (DNQEGVKTEDTPAEKETGPEV) are compositionally biased toward basic and acidic residues. D577, N579, D581, N583, and D588 together coordinate Ca(2+). The tract at residues 602-893 (GWEKVKDITA…DVMTKYFQHF (292 aa)) is catalytic. D658 lines the substrate pocket. D764 (nucleophile) is an active-site residue. Residue E796 is the Proton donor/acceptor of the active site. The Ca(2+) site is built by D1233, E1235, E1281, W1284, and D1411. The tract at residues 1711–1730 (LASEQGKTPDYKQEIARPET) is disordered. Over residues 1717-1730 (KTPDYKQEIARPET) the composition is skewed to basic and acidic residues. The LPXTG sorting signal signature appears at 1735-1739 (LPATG). T1738 bears the Pentaglycyl murein peptidoglycan amidated threonine mark. The propeptide at 1739 to 1767 (GESQSDTALILASVSLALSALFVVKTKKD) is removed by sortase.

The protein belongs to the glycosyl hydrolase 101 family. A subfamily.

The protein localises to the secreted. It is found in the cell wall. It catalyses the reaction a 3-O-[beta-D-galactosyl-(1-&gt;3)-N-acetyl-alpha-D-galactosaminyl]-L-threonyl-[protein] + H2O = beta-D-galactosyl-(1-&gt;3)-N-acetyl-D-galactosamine + L-threonyl-[protein]. The enzyme catalyses a 3-O-[beta-D-galactosyl-(1-&gt;3)-N-acetyl-alpha-D-galactosaminyl]-L-seryl-[protein] + H2O = beta-D-galactosyl-(1-&gt;3)-N-acetyl-D-galactosamine + L-seryl-[protein]. Its function is as follows. Involved in the breakdown of mucin-type O-linked glycans. Specifically removes the T-antigen disaccharide (Gal-beta-1,3-GalNAc-alpha) from extracellular host glycoproteins. Representative of a broadly important class of virulence factors. The polypeptide is Endo-alpha-N-acetylgalactosaminidase (Streptococcus pneumoniae serotype 4 (strain ATCC BAA-334 / TIGR4)).